Consider the following 236-residue polypeptide: Small ribosomal subunit protein uS3 (236 aa).

The KH type-2 domain occupies 39-107; sequence IREFLTEELK…DTSLNIVEVR (69 aa). Positions 214 to 236 are disordered; sequence ASERRAVEGDNQGSSSNRRRENA.

This sequence belongs to the universal ribosomal protein uS3 family. Part of the 30S ribosomal subunit. Forms a tight complex with proteins S10 and S14.

Its function is as follows. Binds the lower part of the 30S subunit head. Binds mRNA in the 70S ribosome, positioning it for translation. In Brucella canis (strain ATCC 23365 / NCTC 10854 / RM-666), this protein is Small ribosomal subunit protein uS3.